The chain runs to 135 residues: MNISDVAKITGLTSKAIRFYEEKGLVTPPMRSENGYRTYTQQHLNELTLLRQARQVGFNLEESGELVNLFNDPQRHSADVKRRTLEKVAEIEQHIEELQSMRNQLLALANACPGDDSADCPIIENLSGCCHHRAG.

One can recognise an HTH merR-type domain in the interval 1 to 69; the sequence is MNISDVAKIT…LEESGELVNL (69 aa). A DNA-binding region (H-T-H motif) is located at residues 4 to 23; the sequence is SDVAKITGLTSKAIRFYEEK. Residues cysteine 112 and cysteine 120 each contribute to the Cu(+) site.

As to quaternary structure, homodimer.

It localises to the cytoplasm. In terms of biological role, regulates the transcription of the copA and cueO genes. It detects cytoplasmic copper stress and activates transcription in response to increasing copper concentrations. This chain is HTH-type transcriptional regulator CueR (cueR), found in Escherichia coli O6:H1 (strain CFT073 / ATCC 700928 / UPEC).